Here is a 209-residue protein sequence, read N- to C-terminus: Molybdenum cofactor guanylyltransferase (209 aa).

GTP-binding positions include 16–18, lysine 28, asparagine 56, aspartate 69, and aspartate 103; that span reads LAG. Aspartate 103 is a Mg(2+) binding site.

Belongs to the MobA family. As to quaternary structure, monomer. Requires Mg(2+) as cofactor.

The protein resides in the cytoplasm. The catalysed reaction is Mo-molybdopterin + GTP + H(+) = Mo-molybdopterin guanine dinucleotide + diphosphate. Transfers a GMP moiety from GTP to Mo-molybdopterin (Mo-MPT) cofactor (Moco or molybdenum cofactor) to form Mo-molybdopterin guanine dinucleotide (Mo-MGD) cofactor. In Rhizobium leguminosarum bv. trifolii (strain WSM2304), this protein is Molybdenum cofactor guanylyltransferase.